The sequence spans 240 residues: Uridylate kinase (240 aa).

12–15 (KLSG) is an ATP binding site. The involved in allosteric activation by GTP stretch occupies residues 20–25 (GDQGKG). Gly-54 is a UMP binding site. Gly-55 and Arg-59 together coordinate ATP. UMP is bound by residues Asp-74 and 135–142 (TGSPYFST). ATP is bound by residues Asn-163, Tyr-169, and Asp-172.

The protein belongs to the UMP kinase family. Homohexamer.

It localises to the cytoplasm. The enzyme catalyses UMP + ATP = UDP + ADP. Its pathway is pyrimidine metabolism; CTP biosynthesis via de novo pathway; UDP from UMP (UMPK route): step 1/1. Allosterically activated by GTP. Inhibited by UTP. Functionally, catalyzes the reversible phosphorylation of UMP to UDP. This chain is Uridylate kinase, found in Ligilactobacillus salivarius (strain UCC118) (Lactobacillus salivarius).